A 72-amino-acid polypeptide reads, in one-letter code: 3-deoxy-manno-octulosonate cytidylyltransferase (72 aa).

The protein belongs to the KdsB family. As to quaternary structure, homodimer.

It is found in the cytoplasm. The enzyme catalyses 3-deoxy-alpha-D-manno-oct-2-ulosonate + CTP = CMP-3-deoxy-beta-D-manno-octulosonate + diphosphate. It functions in the pathway nucleotide-sugar biosynthesis; CMP-3-deoxy-D-manno-octulosonate biosynthesis; CMP-3-deoxy-D-manno-octulosonate from 3-deoxy-D-manno-octulosonate and CTP: step 1/1. It participates in bacterial outer membrane biogenesis; lipopolysaccharide biosynthesis. In terms of biological role, activates KDO (a required 8-carbon sugar) for incorporation into bacterial lipopolysaccharide in Gram-negative bacteria. The chain is 3-deoxy-manno-octulosonate cytidylyltransferase (kpsU) from Escherichia coli.